A 157-amino-acid chain; its full sequence is S-ribosylhomocysteine lyase 2 (157 aa).

Fe cation-binding residues include His-54, His-58, and Cys-124.

Belongs to the LuxS family. As to quaternary structure, homodimer. Fe cation is required as a cofactor.

The enzyme catalyses S-(5-deoxy-D-ribos-5-yl)-L-homocysteine = (S)-4,5-dihydroxypentane-2,3-dione + L-homocysteine. Its function is as follows. Involved in the synthesis of autoinducer 2 (AI-2) which is secreted by bacteria and is used to communicate both the cell density and the metabolic potential of the environment. The regulation of gene expression in response to changes in cell density is called quorum sensing. Catalyzes the transformation of S-ribosylhomocysteine (RHC) to homocysteine (HC) and 4,5-dihydroxy-2,3-pentadione (DPD). The chain is S-ribosylhomocysteine lyase 2 from Lactobacillus delbrueckii subsp. bulgaricus (strain ATCC BAA-365 / Lb-18).